A 363-amino-acid polypeptide reads, in one-letter code: Flagellar P-ring protein (363 aa).

A signal peptide spans 1–18 (MWKKVLIAIVFITSFSFA).

Belongs to the FlgI family. The basal body constitutes a major portion of the flagellar organelle and consists of four rings (L,P,S, and M) mounted on a central rod.

It localises to the periplasm. The protein localises to the bacterial flagellum basal body. Its function is as follows. Assembles around the rod to form the L-ring and probably protects the motor/basal body from shearing forces during rotation. The protein is Flagellar P-ring protein of Sulfurihydrogenibium sp. (strain YO3AOP1).